The sequence spans 1258 residues: Phosphatidylinositol 3,4,5-trisphosphate 5-phosphatase 2 (1258 aa).

An SH2 domain is found at 21 to 117 (WYHRDLSRAA…GLVCALLLPV (97 aa)). The span at 119 to 132 (GEREPDPPDDRDAS) shows a compositional bias: basic and acidic residues. The tract at residues 119–180 (GEREPDPPDD…AESAPNGLST (62 aa)) is disordered. A Phosphoserine modification is found at S132. Positions 145–155 (SGSTSISAPTG) are enriched in polar residues. Residues 156 to 166 (PSSPLPAPETP) show a composition bias toward pro residues. A Phosphothreonine modification is found at T165. Residues S241 and S352 each carry the phosphoserine modification. Residue Y886 is modified to Phosphotyrosine. S890 carries the post-translational modification Phosphoserine. Residues 897 to 1118 (GAKSKAPSVS…FLGEVASGDD (222 aa)) are disordered. The segment covering 938 to 950 (PPPTGRPPAPPRA) has biased composition (pro residues). Residues 944 to 949 (PPAPPR) carry the SH3-binding motif. Basic and acidic residues predominate over residues 951 to 965 (APREEPLTPRLKPEG). Residue T958 is modified to Phosphothreonine. Residues 983-986 (NPAY) carry the NPXY motif motif. Y986 bears the Phosphotyrosine; by SRC mark. Pro residues-rich tracts occupy residues 996-1007 (LLPPEPPSPARA), 1048-1059 (LPPPDFPPPPLP), and 1087-1104 (GPPP…PGPS). At S1131 the chain carries Phosphoserine. Phosphotyrosine is present on residues Y1135 and Y1162. Residues 1196-1258 (LGEAGMSAWL…LLLDTLQLSK (63 aa)) form the SAM domain. At S1257 the chain carries Phosphoserine.

Belongs to the inositol 1,4,5-trisphosphate 5-phosphatase family. Interacts with tyrosine phosphorylated form of SHC1. Interacts with EGFR. Upon stimulation by the EGF signaling pathway, it forms a complex with SHC1 and EGFR. Interacts with cytoskeletal protein SORBS3/vinexin, promoting its localization to the periphery of cells. Forms a complex with filamin (FLNA or FLNB), actin, GPIb (GP1BA or GP1BB) that regulates cortical and submembraneous actin. Interacts with c-Met/MET, when c-Met/MET is phosphorylated on 'Tyr-1356'. Interacts with p130Cas/BCAR1. Interacts with CENTD3/ARAP3 via its SAM domain. Interacts with c-Cbl/CBL and CAP/SORBS1. Interacts with activated EPHA2 receptor. Interacts with receptor FCGR2A. Interacts with receptor FCGR2B. Interacts with tyrosine kinase ABL1. Interacts with tyrosine kinase TEC. Interacts with CSF1R. Interacts (via N-terminus) with SH3YL1 (via SH3 domain). Interacts with FCRL6 (tyrosine phosphorylated form). Interacts (via SH2 domain) with tyrosine phosphorylated KLRC1 (via ITIM). Interacts with NEDD9/HEF1. Post-translationally, tyrosine phosphorylated by the members of the SRC family after exposure to a diverse array of extracellular stimuli such as insulin, growth factors such as EGF or PDGF, chemokines, integrin ligands and hypertonic and oxidative stress. May be phosphorylated upon IgG receptor FCGR2B-binding. Phosphorylated at Tyr-986 following cell attachment and spreading. Phosphorylated at Tyr-1162 following EGF signaling pathway stimulation. Phosphorylated at Thr-958 in response to PDGF. Widely expressed, most prominently in skeletal muscle, heart and brain. Present in platelets. Expressed in transformed myeloid cells and in primary macrophages, but not in peripheral blood monocytes.

The protein localises to the cytoplasm. It is found in the cytosol. It localises to the cytoskeleton. The protein resides in the membrane. Its subcellular location is the cell projection. The protein localises to the filopodium. It is found in the lamellipodium. It localises to the basal cell membrane. The protein resides in the nucleus. Its subcellular location is the nucleus speckle. The protein localises to the spindle pole. The enzyme catalyses a 1,2-diacyl-sn-glycero-3-phospho-(1D-myo-inositol-3,4,5-trisphosphate) + H2O = a 1,2-diacyl-sn-glycero-3-phospho-(1D-myo-inositol-3,4-bisphosphate) + phosphate. It carries out the reaction 1,2-dioctanoyl-sn-glycero-3-phospho-(1D-myo-inositol-3,4,5-trisphosphate) + H2O = 1,2-dioctanoyl-sn-glycero-3-phospho-(1D-myo-inositol-3,4-bisphosphate) + phosphate. It catalyses the reaction 1,2-dihexadecanoyl-sn-glycero-3-phospho-(1D-myo-inositol-3,4,5-trisphosphate) + H2O = 1,2-dihexadecanoyl-sn-glycero-3-phospho-(1D-myo-inositol-3,4-bisphosphate) + phosphate. Activated upon translocation to the sites of synthesis of PtdIns(3,4,5)P3 in the membrane. Enzymatic activity is enhanced in the presence of phosphatidylserine. In terms of biological role, phosphatidylinositol (PtdIns) phosphatase that specifically hydrolyzes the 5-phosphate of phosphatidylinositol-3,4,5-trisphosphate (PtdIns(3,4,5)P3) to produce PtdIns(3,4)P2, thereby negatively regulating the PI3K (phosphoinositide 3-kinase) pathways. Required for correct mitotic spindle orientation and therefore progression of mitosis. Plays a central role in regulation of PI3K-dependent insulin signaling, although the precise molecular mechanisms and signaling pathways remain unclear. While overexpression reduces both insulin-stimulated MAP kinase and Akt activation, its absence does not affect insulin signaling or GLUT4 trafficking. Confers resistance to dietary obesity. May act by regulating AKT2, but not AKT1, phosphorylation at the plasma membrane. Part of a signaling pathway that regulates actin cytoskeleton remodeling. Required for the maintenance and dynamic remodeling of actin structures as well as in endocytosis, having a major impact on ligand-induced EGFR internalization and degradation. Participates in regulation of cortical and submembraneous actin by hydrolyzing PtdIns(3,4,5)P3 thereby regulating membrane ruffling. Regulates cell adhesion and cell spreading. Required for HGF-mediated lamellipodium formation, cell scattering and spreading. Acts as a negative regulator of EPHA2 receptor endocytosis by inhibiting via PI3K-dependent Rac1 activation. Acts as a regulator of neuritogenesis by regulating PtdIns(3,4,5)P3 level and is required to form an initial protrusive pattern, and later, maintain proper neurite outgrowth. Acts as a negative regulator of the FC-gamma-RIIA receptor (FCGR2A). Mediates signaling from the FC-gamma-RIIB receptor (FCGR2B), playing a central role in terminating signal transduction from activating immune/hematopoietic cell receptor systems. Involved in EGF signaling pathway. Upon stimulation by EGF, it is recruited by EGFR and dephosphorylates PtdIns(3,4,5)P3. Plays a negative role in regulating the PI3K-PKB pathway, possibly by inhibiting PKB activity. Down-regulates Fc-gamma-R-mediated phagocytosis in macrophages independently of INPP5D/SHIP1. In macrophages, down-regulates NF-kappa-B-dependent gene transcription by regulating macrophage colony-stimulating factor (M-CSF)-induced signaling. Plays a role in the localization of AURKA and NEDD9/HEF1 to the basolateral membrane at interphase in polarized cysts, thereby mediates cell cycle homeostasis, cell polarization and cilia assembly. Additionally promotion of cilia growth is also facilitated by hydrolysis of (PtdIns(3,4,5)P3) to PtdIns(3,4)P2. Promotes formation of apical membrane-initiation sites during the initial stages of lumen formation via Rho family-induced actin filament organization and CTNNB1 localization to cell-cell contacts. May also hydrolyze PtdIns(1,3,4,5)P4, and could thus affect the levels of the higher inositol polyphosphates like InsP6. Involved in endochondral ossification. The protein is Phosphatidylinositol 3,4,5-trisphosphate 5-phosphatase 2 of Homo sapiens (Human).